The primary structure comprises 212 residues: Phosphoribosylformylglycinamidine synthase subunit PurQ (212 aa).

A Glutamine amidotransferase type-1 domain is found at 2–212 (RIAVLKFPGT…WLGLISWLRR (211 aa)). Cys-85 (nucleophile) is an active-site residue. Residues His-183, Glu-185, and His-191 contribute to the active site.

As to quaternary structure, part of the FGAM synthase complex composed of 1 PurL, 1 PurQ and 2 PurS subunits.

The protein localises to the cytoplasm. The enzyme catalyses N(2)-formyl-N(1)-(5-phospho-beta-D-ribosyl)glycinamide + L-glutamine + ATP + H2O = 2-formamido-N(1)-(5-O-phospho-beta-D-ribosyl)acetamidine + L-glutamate + ADP + phosphate + H(+). It catalyses the reaction L-glutamine + H2O = L-glutamate + NH4(+). Its pathway is purine metabolism; IMP biosynthesis via de novo pathway; 5-amino-1-(5-phospho-D-ribosyl)imidazole from N(2)-formyl-N(1)-(5-phospho-D-ribosyl)glycinamide: step 1/2. Its function is as follows. Part of the phosphoribosylformylglycinamidine synthase complex involved in the purines biosynthetic pathway. Catalyzes the ATP-dependent conversion of formylglycinamide ribonucleotide (FGAR) and glutamine to yield formylglycinamidine ribonucleotide (FGAM) and glutamate. The FGAM synthase complex is composed of three subunits. PurQ produces an ammonia molecule by converting glutamine to glutamate. PurL transfers the ammonia molecule to FGAR to form FGAM in an ATP-dependent manner. PurS interacts with PurQ and PurL and is thought to assist in the transfer of the ammonia molecule from PurQ to PurL. The polypeptide is Phosphoribosylformylglycinamidine synthase subunit PurQ (Pyrobaculum aerophilum (strain ATCC 51768 / DSM 7523 / JCM 9630 / CIP 104966 / NBRC 100827 / IM2)).